Reading from the N-terminus, the 732-residue chain is MDNQLFFKSIIATLPKRIHKCQTVSKAPENCAKMPKSIQFRGFSGTGEPFRRLDFRMGQRAFSYERQRPLAFLSFSSLPGRREGSAWTERLRALWKHCKKDQFKAEGLFRLIKDINLWIAAYKKLSPGSKNDGERPKGTSIKALETLRDSVINPPPTLGGGSSTGRSWPKGHETLERGSKALGPESPKETSLALQKKRRRPEMASPHTILPRVLRTHKVSRALWVVGPSDASLALRGLTQKDKDILVQEVIRSILETLYEPYFLSCSHGFRPGRSQHTCLKQIRRDFVGTVWFIEGETSQYFNKIDKQVLIGLMRRRIRDNRFLNLVQKEIKTSLRAGAEGTGVGPLLCNIVLHELDLFVMRLKRIVDRGRRRAVNPESKELWRQSAALIDRTTAHRARVPFPSGAFGRGLGHPQETRQINYVRFADDFLIGVIGPRALAERIRGLVTRFIEVRLKLRLTLDKTRKPIQSRPNTLPAHYVPMGPKETGPKVENDFTISGGPGKKKTQIFCITKNKKIPFLGYLISRDSKHTYNLVRRGRRYRIRRSGGLSLLVDMQKVINRLAEKGFCDKSGHPKPNFAYFQYPQSYSVARIASILRGLANYYHLANSKRQCVTRLSYILRTSLAKTYAAKFKLGTAAKVFAKGGRDLSKPIKAKKARRPLLNRVLGSKTTAHRRRGAGSEGHSPAIPYTRYGQIKLPDTKPLTKNWQPGQARLNCIAKKNLYQNCNREGND.

Positions 145–207 are disordered; that stretch reads ETLRDSVINP…RRRPEMASPH (63 aa). Positions 170–179 are enriched in basic and acidic residues; sequence KGHETLERGS. A Reverse transcriptase domain is found at 176–524; sequence ERGSKALGPE…KKIPFLGYLI (349 aa).

It localises to the mitochondrion. This is an uncharacterized protein from Marchantia polymorpha (Common liverwort).